We begin with the raw amino-acid sequence, 141 residues long: Aspartate 1-decarboxylase (141 aa).

The active-site Schiff-base intermediate with substrate; via pyruvic acid is serine 25. Pyruvic acid (Ser) is present on serine 25. Threonine 57 serves as a coordination point for substrate. The active-site Proton donor is tyrosine 58. 73 to 75 (GAA) is a substrate binding site.

The protein belongs to the PanD family. In terms of assembly, heterooctamer of four alpha and four beta subunits. Requires pyruvate as cofactor. Post-translationally, is synthesized initially as an inactive proenzyme, which is activated by self-cleavage at a specific serine bond to produce a beta-subunit with a hydroxyl group at its C-terminus and an alpha-subunit with a pyruvoyl group at its N-terminus.

The protein localises to the cytoplasm. It catalyses the reaction L-aspartate + H(+) = beta-alanine + CO2. Its pathway is cofactor biosynthesis; (R)-pantothenate biosynthesis; beta-alanine from L-aspartate: step 1/1. Catalyzes the pyruvoyl-dependent decarboxylation of aspartate to produce beta-alanine. The protein is Aspartate 1-decarboxylase of Pseudarthrobacter chlorophenolicus (strain ATCC 700700 / DSM 12829 / CIP 107037 / JCM 12360 / KCTC 9906 / NCIMB 13794 / A6) (Arthrobacter chlorophenolicus).